The following is a 621-amino-acid chain: Probable bifunctional dTTP/UTP pyrophosphatase/methyltransferase protein (621 aa).

Residues 11–223 (LHKRVVLASA…PPRPEDLRRS (213 aa)) are MAF-like. At Ser-21 the chain carries Phosphoserine. The active-site Proton acceptor; for pyrophosphatase activity is the Asp-88. Ser-228 bears the Phosphoserine mark. The residue at position 234 (Thr-234) is a Phosphothreonine. A disordered region spans residues 235–279 (FEDLSDVEGGGSEPTQRDAGSRDEKAEAGEAGQATAEAECHRTRE). Ser-239 carries the phosphoserine modification. The span at 249–262 (TQRDAGSRDEKAEA) shows a compositional bias: basic and acidic residues. Residues 277-621 (TRETLPPFPT…DAILATKVAP (345 aa)) form an ASMT-like region. Ser-421 carries the phosphoserine modification. Residues Asp-482, 508-510 (GDF), and Arg-525 contribute to the S-adenosyl-L-methionine site.

In the N-terminal section; belongs to the Maf family. YhdE subfamily. The protein in the C-terminal section; belongs to the class I-like SAM-binding methyltransferase superfamily. Cation-independent O-methyltransferase family. Homodimer. Requires a divalent metal cation as cofactor. As to expression, widely expressed. In adult, highly expressed in pancreas, placenta, fibroblast, thymus, prostate, testis, ovary and colon. Expressed at lower levels in spleen, small intestine and leukocytes. In fetus, expressed at high levels in the lung and kidney and at lower level in brain and liver.

The catalysed reaction is dTTP + H2O = dTMP + diphosphate + H(+). The enzyme catalyses UTP + H2O = UMP + diphosphate + H(+). It carries out the reaction CTP + H2O = CMP + diphosphate + H(+). It catalyses the reaction psi-UTP + H2O = psi-UMP + diphosphate + H(+). The catalysed reaction is 5-methyl-UTP + H2O = 5-methyl-UMP + diphosphate + H(+). The enzyme catalyses 5-methyl-CTP + H2O = 5-methyl-CMP + diphosphate + H(+). Its function is as follows. Nucleoside triphosphate pyrophosphatase that hydrolyzes dTTP and UTP. Can also hydrolyze CTP and the modified nucleotides pseudo-UTP, 5-methyl-UTP (m(5)UTP) and 5-methyl-CTP (m(5)CTP). Has weak activity with dCTP, 8-oxo-GTP and N(4)-methyl-dCTP. May have a dual role in cell division arrest and in preventing the incorporation of modified nucleotides into cellular nucleic acids. In addition, the presence of the putative catalytic domain of S-adenosyl-L-methionine binding in the C-terminal region argues for a methyltransferase activity. The polypeptide is Probable bifunctional dTTP/UTP pyrophosphatase/methyltransferase protein (ASMTL) (Homo sapiens (Human)).